The sequence spans 412 residues: Tryptophan synthase beta chain (412 aa).

N6-(pyridoxal phosphate)lysine is present on Lys92.

This sequence belongs to the TrpB family. Tetramer of two alpha and two beta chains. Pyridoxal 5'-phosphate is required as a cofactor.

It catalyses the reaction (1S,2R)-1-C-(indol-3-yl)glycerol 3-phosphate + L-serine = D-glyceraldehyde 3-phosphate + L-tryptophan + H2O. It functions in the pathway amino-acid biosynthesis; L-tryptophan biosynthesis; L-tryptophan from chorismate: step 5/5. The beta subunit is responsible for the synthesis of L-tryptophan from indole and L-serine. This chain is Tryptophan synthase beta chain, found in Methylibium petroleiphilum (strain ATCC BAA-1232 / LMG 22953 / PM1).